We begin with the raw amino-acid sequence, 490 residues long: Betaine aldehyde dehydrogenase (490 aa).

K(+) is bound at residue D93. Position 150 to 152 (150 to 152 (GAW)) interacts with NAD(+). The Charge relay system role is filled by K162. 176–179 (KPSE) is a binding site for NAD(+). V180 contacts K(+). Position 230–233 (230–233 (GVKT)) interacts with NAD(+). Position 246 (L246) interacts with K(+). The active-site Proton acceptor is E252. NAD(+) is bound by residues G254, C286, and E387. C286 functions as the Nucleophile in the catalytic mechanism. C286 is modified (cysteine sulfenic acid (-SOH)). Positions 457 and 460 each coordinate K(+). Catalysis depends on E464, which acts as the Charge relay system.

This sequence belongs to the aldehyde dehydrogenase family. Dimer of dimers. Requires K(+) as cofactor.

The catalysed reaction is betaine aldehyde + NAD(+) + H2O = glycine betaine + NADH + 2 H(+). It participates in amine and polyamine biosynthesis; betaine biosynthesis via choline pathway; betaine from betaine aldehyde: step 1/1. Functionally, involved in the biosynthesis of the osmoprotectant glycine betaine. Catalyzes the irreversible oxidation of betaine aldehyde to the corresponding acid. The sequence is that of Betaine aldehyde dehydrogenase from Serratia proteamaculans (strain 568).